A 128-amino-acid polypeptide reads, in one-letter code: Large ribosomal subunit protein bL17 (128 aa).

The protein belongs to the bacterial ribosomal protein bL17 family. In terms of assembly, part of the 50S ribosomal subunit. Contacts protein L32.

The sequence is that of Large ribosomal subunit protein bL17 from Streptococcus agalactiae serotype Ia (strain ATCC 27591 / A909 / CDC SS700).